The sequence spans 674 residues: DNA ligase (674 aa).

Residues 35–39 (DFEFD), 84–85 (SL), and glutamate 118 each bind NAD(+). Catalysis depends on lysine 120, which acts as the N6-AMP-lysine intermediate. NAD(+)-binding residues include arginine 141, glutamate 184, lysine 297, and lysine 321. Zn(2+) contacts are provided by cysteine 415, cysteine 418, cysteine 433, and cysteine 439. Residues 598-674 (QVNRNFEGVT…VSEDEFEAML (77 aa)) enclose the BRCT domain.

The protein belongs to the NAD-dependent DNA ligase family. LigA subfamily. Mg(2+) serves as cofactor. Requires Mn(2+) as cofactor.

It carries out the reaction NAD(+) + (deoxyribonucleotide)n-3'-hydroxyl + 5'-phospho-(deoxyribonucleotide)m = (deoxyribonucleotide)n+m + AMP + beta-nicotinamide D-nucleotide.. Its function is as follows. DNA ligase that catalyzes the formation of phosphodiester linkages between 5'-phosphoryl and 3'-hydroxyl groups in double-stranded DNA using NAD as a coenzyme and as the energy source for the reaction. It is essential for DNA replication and repair of damaged DNA. The polypeptide is DNA ligase (Pelodictyon phaeoclathratiforme (strain DSM 5477 / BU-1)).